A 389-amino-acid chain; its full sequence is Serpin B13 (389 aa).

It belongs to the serpin family. Ov-serpin subfamily.

The protein localises to the cytoplasm. In terms of biological role, may play a role in the proliferation or differentiation of keratinocytes. This is Serpin B13 (Serpinb13) from Mus musculus (Mouse).